Here is a 391-residue protein sequence, read N- to C-terminus: 23S rRNA (uracil(747)-C(5))-methyltransferase RlmC (391 aa).

Positions 5, 13, 16, and 95 each coordinate [4Fe-4S] cluster. Positions 220, 249, 276, and 322 each coordinate S-adenosyl-L-methionine. The Nucleophile role is filled by cysteine 349.

This sequence belongs to the class I-like SAM-binding methyltransferase superfamily. RNA M5U methyltransferase family. RlmC subfamily.

The enzyme catalyses uridine(747) in 23S rRNA + S-adenosyl-L-methionine = 5-methyluridine(747) in 23S rRNA + S-adenosyl-L-homocysteine + H(+). Functionally, catalyzes the formation of 5-methyl-uridine at position 747 (m5U747) in 23S rRNA. This Actinobacillus pleuropneumoniae serotype 5b (strain L20) protein is 23S rRNA (uracil(747)-C(5))-methyltransferase RlmC.